The primary structure comprises 156 residues: Small ribosomal subunit protein uS7 (156 aa).

This sequence belongs to the universal ribosomal protein uS7 family. In terms of assembly, part of the 30S ribosomal subunit. Contacts proteins S9 and S11.

Its function is as follows. One of the primary rRNA binding proteins, it binds directly to 16S rRNA where it nucleates assembly of the head domain of the 30S subunit. Is located at the subunit interface close to the decoding center, probably blocks exit of the E-site tRNA. The chain is Small ribosomal subunit protein uS7 from Natranaerobius thermophilus (strain ATCC BAA-1301 / DSM 18059 / JW/NM-WN-LF).